Reading from the N-terminus, the 170-residue chain is Myosin regulatory light chain 2 (170 aa).

The span at 1 to 13 (MSKAAKKKSSKKR) shows a compositional bias: basic residues. The interval 1-22 (MSKAAKKKSSKKRSGSEAAQFD) is disordered. EF-hand domains lie at 24–59 (KTIQEFKEAFGIMDQNKDGIIDKSDLKDLYASMGQI) and 93–128 (DPEATIVGAFAMFDKKDCGKIKEDDLIKILQNKRGE). Residues aspartate 37, asparagine 39, aspartate 41, and aspartate 48 each contribute to the Ca(2+) site.

Myosin is a hexamer of 2 heavy chains and 4 light chains (two regulatory light chains and two essential light chains).

The chain is Myosin regulatory light chain 2 (mlc-2) from Caenorhabditis elegans.